A 592-amino-acid chain; its full sequence is Tegument protein US23 (592 aa).

The interval 407–491 (PRSLGDGEEE…NNVVPNVERR (85 aa)) is disordered. A compositionally biased stretch (acidic residues) spans 460-481 (ADDEEQGEDDDDSGAEPMEPEE).

This sequence belongs to the herpesviridae US22 family.

The protein localises to the virion tegument. This chain is Tegument protein US23 (US23), found in Homo sapiens (Human).